The following is a 533-amino-acid chain: Tyrosinase (533 aa).

Positions 1–18 (MFLAVLYCLLWSFQISDG) are cleaved as a signal peptide. Residues 19–476 (HFPRACASSK…YLEQASRIWP (458 aa)) are Lumenal, melanosome-facing. N-linked (GlcNAc...) asparagine glycosylation is found at Asn-86, Asn-111, and Asn-161. Cu cation is bound by residues His-180, His-202, and His-211. N-linked (GlcNAc...) asparagine glycans are attached at residues Asn-230 and Asn-337. Residues His-363 and His-367 each contribute to the Cu cation site. An N-linked (GlcNAc...) asparagine glycan is attached at Asn-371. Residue His-390 coordinates Cu cation. Residues 477–497 (WLLGAALVGAVIAAALSGLSS) traverse the membrane as a helical segment. Over 498-533 (RLCLQKKKKKKQPQEERQPLLMDKDDYHSLLYQSHL) the chain is Cytoplasmic.

It belongs to the tyrosinase family. In terms of assembly, forms an OPN3-dependent complex with DCT in response to blue light in melanocytes. Cu(2+) is required as a cofactor. Glycosylated. As to expression, expressed in the skin.

Its subcellular location is the melanosome membrane. The protein localises to the melanosome. The enzyme catalyses 2 L-dopa + O2 = 2 L-dopaquinone + 2 H2O. The catalysed reaction is L-tyrosine + O2 = L-dopaquinone + H2O. It carries out the reaction 2 5,6-dihydroxyindole-2-carboxylate + O2 = 2 indole-5,6-quinone-2-carboxylate + 2 H2O. Functionally, this is a copper-containing oxidase that functions in the formation of pigments such as melanins and other polyphenolic compounds. Catalyzes the initial and rate limiting step in the cascade of reactions leading to melanin production from tyrosine. In addition to hydroxylating tyrosine to DOPA (3,4-dihydroxyphenylalanine), also catalyzes the oxidation of DOPA to DOPA-quinone, and possibly the oxidation of DHI (5,6-dihydroxyindole) to indole-5,6 quinone. In Mus musculus (Mouse), this protein is Tyrosinase (Tyr).